We begin with the raw amino-acid sequence, 655 residues long: Ubiquilin-3 (655 aa).

One can recognise a Ubiquitin-like domain in the interval 22-98; it reads IKVTVKTPKD…LVIKRQHRAM (77 aa). The tract at residues 102 to 124 is disordered; it reads CPAASVPTQGPSPGSLPQPSSIY. A compositionally biased stretch (low complexity) spans 110-122; sequence QGPSPGSLPQPSS. The STI1 domain occupies 194–233; sequence NPHMQQLIQHNPEIGHILNNPEIMRQTLEFLRNPAMMQEM. 3 disordered regions span residues 277–330, 364–399, and 412–447; these read PFAT…PDIR, ASAL…LPEE, and FLRY…LVSG. Residues 279-290 show a composition bias toward low complexity; sequence ATATTDNATTTT. The span at 318 to 330 shows a compositional bias: basic and acidic residues; it reads GRQDGDQDAPDIR. The span at 377–395 shows a compositional bias: low complexity; the sequence is VNRVPPSSPSSQEPGSGQP. The segment covering 432 to 441 has biased composition (polar residues); the sequence is KSSTGHSTNL. In terms of domain architecture, UBA spans 609-655; it reads QLQPEAHFQVQLEQLRSMGFLNREANLQALIATGGDVDAAVEKLRQS.

Testis specific.

This is Ubiquilin-3 (UBQLN3) from Homo sapiens (Human).